We begin with the raw amino-acid sequence, 315 residues long: 4-hydroxy-3-methylbut-2-enyl diphosphate reductase (315 aa).

Residue Cys12 coordinates [4Fe-4S] cluster. The (2E)-4-hydroxy-3-methylbut-2-enyl diphosphate site is built by His41 and His74. 2 residues coordinate dimethylallyl diphosphate: His41 and His74. His41 and His74 together coordinate isopentenyl diphosphate. Cys96 is a [4Fe-4S] cluster binding site. (2E)-4-hydroxy-3-methylbut-2-enyl diphosphate is bound at residue His124. Position 124 (His124) interacts with dimethylallyl diphosphate. Residue His124 participates in isopentenyl diphosphate binding. Residue Glu126 is the Proton donor of the active site. Thr168 contributes to the (2E)-4-hydroxy-3-methylbut-2-enyl diphosphate binding site. Cys198 is a binding site for [4Fe-4S] cluster. Ser226, Ser227, Asn228, and Ser270 together coordinate (2E)-4-hydroxy-3-methylbut-2-enyl diphosphate. The dimethylallyl diphosphate site is built by Ser226, Ser227, Asn228, and Ser270. Positions 226, 227, 228, and 270 each coordinate isopentenyl diphosphate.

The protein belongs to the IspH family. It depends on [4Fe-4S] cluster as a cofactor.

It carries out the reaction isopentenyl diphosphate + 2 oxidized [2Fe-2S]-[ferredoxin] + H2O = (2E)-4-hydroxy-3-methylbut-2-enyl diphosphate + 2 reduced [2Fe-2S]-[ferredoxin] + 2 H(+). The catalysed reaction is dimethylallyl diphosphate + 2 oxidized [2Fe-2S]-[ferredoxin] + H2O = (2E)-4-hydroxy-3-methylbut-2-enyl diphosphate + 2 reduced [2Fe-2S]-[ferredoxin] + 2 H(+). The protein operates within isoprenoid biosynthesis; dimethylallyl diphosphate biosynthesis; dimethylallyl diphosphate from (2E)-4-hydroxy-3-methylbutenyl diphosphate: step 1/1. It functions in the pathway isoprenoid biosynthesis; isopentenyl diphosphate biosynthesis via DXP pathway; isopentenyl diphosphate from 1-deoxy-D-xylulose 5-phosphate: step 6/6. Its function is as follows. Catalyzes the conversion of 1-hydroxy-2-methyl-2-(E)-butenyl 4-diphosphate (HMBPP) into a mixture of isopentenyl diphosphate (IPP) and dimethylallyl diphosphate (DMAPP). Acts in the terminal step of the DOXP/MEP pathway for isoprenoid precursor biosynthesis. The chain is 4-hydroxy-3-methylbut-2-enyl diphosphate reductase from Azotobacter vinelandii (strain DJ / ATCC BAA-1303).